Reading from the N-terminus, the 293-residue chain is uncharacterized protein (293 aa).

The region spanning 1–58 (MELKQLITFITAAEHVNFTLTAKMLNYAQSSVTSQIKSLEEEIGTPLFERLGKRLILT) is the HTH lysR-type domain. The segment at residues 18-37 (FTLTAKMLNYAQSSVTSQIK) is a DNA-binding region (H-T-H motif).

It belongs to the LysR transcriptional regulatory family.

The protein resides in the cytoplasm. This is an uncharacterized protein from Bacillus subtilis (strain 168).